We begin with the raw amino-acid sequence, 369 residues long: Putative FAD-dependent oxidoreductase LodB (369 aa).

Residues 10 to 14 and R103 each bind FAD; that span reads GGGPA.

It depends on FAD as a cofactor.

The protein localises to the cytoplasm. Its function is as follows. Is required for lysine-epsilon oxidase (LOD) activity in M.mediterranea. May be involved in the generation of the quinonic cofactor of LodA, leading to the active form of LodA containing a tyrosine-derived quinone cofactor. This chain is Putative FAD-dependent oxidoreductase LodB (lodB), found in Marinomonas mediterranea (strain ATCC 700492 / JCM 21426 / NBRC 103028 / MMB-1).